The chain runs to 921 residues: MEYKNTLLMPKTEFPMRGNLPKREPAMQEKWAEMNIYETVQEHTKGRPLFVLHDGPPYANGDIHMGHALNKVLKDFIVRYKSMTGFCAPYVPGWDTHGLPIEQALTNKGVKRKEMTVAEFRKLCAEYAYEQVERQREQFKRLGVRADWDNPYITLEPAYEAQQIKVFGDMAKKGYIYKGQKPVYWSPTSESALAEAEIEYQDKKSASIYVAFSVKDGKNVLEGDEKYIIWTTTPWTLPANLGISVHPELEYAIVKVNDEKYIIASELFETVAKTLEWENAEVVKTVKGSELEYTVAKHPFYDRDSLVMLGDHVTTDAGTGCVHTAPGHGEDDFIVGKKYGLEVLCPVDDKGVLTEEAPGFEGLFYDKANKPITEKLEEVGALLKLTFITHSYPHDWRTKKPIIFRATAQWFASIEAFRKELLEAVAETKWVPAWGETRLHNMVRDRGDWCISRQRAWGVPIPVFYAENGDPIITDETINHVADLFREHGSNVWFEREAKDLLPEGFTHPGSPNGEFRKETDIMDVWFDSGSSHQAVLEERDDLQRPADLYLEGSDQYRGWFNSSLSTAVAVTGKAPYKGVLSHGFVLDGEGRKMSKSIGNIVVPKKIMDQLGGDILRLWVSSVDYQSDVRISDDILKQVAEVYRKIRNTFRFLLGNLDDFKPSENTVAVAELREVDRYMLVKLNDLITKVKEAYETYDFAAVYHAIHNFCTIDLSSFYLDFAKDILYIEGANHEDRRAIQTVLYDVLVALTKLVTPILPHTADEVWPYIPGVTEESVQLTDMPEAVQLDDAEALKTKWDAFMTLRDDVLKALEVARNEKVIGKSLNASITLYPTAEMKAMLESINEDLKQLFIVSEYKLGGMMEEAPADAPKYEHTAVVVAQATGETCERCWVVSETIGKDAEHETLCERCATVVKENYVK.

Positions 57-67 (PYANGDIHMGH) match the 'HIGH' region motif. E552 serves as a coordination point for L-isoleucyl-5'-AMP. The 'KMSKS' region motif lies at 593 to 597 (KMSKS). Residue K596 coordinates ATP. C888, C891, C908, and C911 together coordinate Zn(2+).

The protein belongs to the class-I aminoacyl-tRNA synthetase family. IleS type 1 subfamily. As to quaternary structure, monomer. Zn(2+) is required as a cofactor.

It localises to the cytoplasm. The catalysed reaction is tRNA(Ile) + L-isoleucine + ATP = L-isoleucyl-tRNA(Ile) + AMP + diphosphate. Its function is as follows. Catalyzes the attachment of isoleucine to tRNA(Ile). As IleRS can inadvertently accommodate and process structurally similar amino acids such as valine, to avoid such errors it has two additional distinct tRNA(Ile)-dependent editing activities. One activity is designated as 'pretransfer' editing and involves the hydrolysis of activated Val-AMP. The other activity is designated 'posttransfer' editing and involves deacylation of mischarged Val-tRNA(Ile). The chain is Isoleucine--tRNA ligase from Bacillus anthracis (strain A0248).